Reading from the N-terminus, the 233-residue chain is tRNA (guanine-N(1)-)-methyltransferase (233 aa).

Residues G110 and 130 to 135 (IGDYVM) each bind S-adenosyl-L-methionine.

The protein belongs to the RNA methyltransferase TrmD family. As to quaternary structure, homodimer.

It is found in the cytoplasm. The enzyme catalyses guanosine(37) in tRNA + S-adenosyl-L-methionine = N(1)-methylguanosine(37) in tRNA + S-adenosyl-L-homocysteine + H(+). Its function is as follows. Specifically methylates guanosine-37 in various tRNAs. The polypeptide is tRNA (guanine-N(1)-)-methyltransferase (Finegoldia magna (strain ATCC 29328 / DSM 20472 / WAL 2508) (Peptostreptococcus magnus)).